We begin with the raw amino-acid sequence, 121 residues long: Large ribosomal subunit protein uL22 (121 aa).

Belongs to the universal ribosomal protein uL22 family. Part of the 50S ribosomal subunit.

In terms of biological role, this protein binds specifically to 23S rRNA; its binding is stimulated by other ribosomal proteins, e.g. L4, L17, and L20. It is important during the early stages of 50S assembly. It makes multiple contacts with different domains of the 23S rRNA in the assembled 50S subunit and ribosome. Functionally, the globular domain of the protein is located near the polypeptide exit tunnel on the outside of the subunit, while an extended beta-hairpin is found that lines the wall of the exit tunnel in the center of the 70S ribosome. In Micrococcus luteus (strain ATCC 4698 / DSM 20030 / JCM 1464 / CCM 169 / CCUG 5858 / IAM 1056 / NBRC 3333 / NCIMB 9278 / NCTC 2665 / VKM Ac-2230) (Micrococcus lysodeikticus), this protein is Large ribosomal subunit protein uL22.